We begin with the raw amino-acid sequence, 269 residues long: Ribonuclease HII (269 aa).

Residues 79–269 (TYLAGADEVG…SFLKNILNTF (191 aa)) enclose the RNase H type-2 domain. Residues D85, E86, and D182 each contribute to the a divalent metal cation site.

This sequence belongs to the RNase HII family. The cofactor is Mn(2+). It depends on Mg(2+) as a cofactor.

The protein resides in the cytoplasm. The catalysed reaction is Endonucleolytic cleavage to 5'-phosphomonoester.. In terms of biological role, endonuclease that specifically degrades the RNA of RNA-DNA hybrids. The protein is Ribonuclease HII of Clostridium novyi (strain NT).